We begin with the raw amino-acid sequence, 195 residues long: Magnetosome membrane protein 22 (195 aa).

Residues 1 to 28 (MAAQTAASEAPAPAAAPADSPTTAGPTP) show a composition bias toward low complexity. The tract at residues 1 to 31 (MAAQTAASEAPAPAAAPADSPTTAGPTPDSV) is disordered. 3 helical membrane-spanning segments follow: residues 45-65 (VLAA…AAVV), 90-110 (SVIA…AVAV), and 115-135 (LIPG…AGAT).

It localises to the magnetosome membrane. The chain is Magnetosome membrane protein 22 from Magnetospirillum gryphiswaldense (strain DSM 6361 / JCM 21280 / NBRC 15271 / MSR-1).